Consider the following 272-residue polypeptide: MSYYTLPPIDPIIMSLGPISIRWYGLMYVIGFFATYFLVRQQIQRHQFTQLEKNFDNLNTVLILCVILGGRLGYVVFYNLSYYLQHPLEILATWHGGMSFHGACIALILGGLIFCKIKKIDFWATADVYVATIPIGLGLGRIGNLINGELYGRVTEQPWGIIFPNGGPLPRHASQLYESLLEGLILFIILWSLRNRPWKRNSLTPHGTILSLFLCLYGLFRIIIENFRQPDPQLGFIVAHITMGQLLSGAMILCGLTLWFWRIHQKKRATAL.

The next 3 membrane-spanning stretches (helical) occupy residues 19-39 (ISIR…YFLV), 58-78 (LNTV…VVFY), and 94-114 (WHGG…GLIF). An a 1,2-diacyl-sn-glycero-3-phospho-(1'-sn-glycerol)-binding site is contributed by Arg-141. The next 2 helical transmembrane spans lie at 207–227 (GTIL…IENF) and 234–254 (LGFI…MILC).

This sequence belongs to the Lgt family.

Its subcellular location is the cell inner membrane. It carries out the reaction L-cysteinyl-[prolipoprotein] + a 1,2-diacyl-sn-glycero-3-phospho-(1'-sn-glycerol) = an S-1,2-diacyl-sn-glyceryl-L-cysteinyl-[prolipoprotein] + sn-glycerol 1-phosphate + H(+). It participates in protein modification; lipoprotein biosynthesis (diacylglyceryl transfer). Catalyzes the transfer of the diacylglyceryl group from phosphatidylglycerol to the sulfhydryl group of the N-terminal cysteine of a prolipoprotein, the first step in the formation of mature lipoproteins. The protein is Phosphatidylglycerol--prolipoprotein diacylglyceryl transferase of Desulfotalea psychrophila (strain LSv54 / DSM 12343).